A 158-amino-acid chain; its full sequence is UPF0145 protein Psyc_1853 (158 aa).

Residues 113 to 122 (IYQSSNQPPS) are compositionally biased toward polar residues. Residues 113–158 (IYQSSNQPPSHHSGHSQYEEPVPSAAQPSTTAQANDDLPRFNPFGE) are disordered.

The protein belongs to the UPF0145 family.

The protein is UPF0145 protein Psyc_1853 of Psychrobacter arcticus (strain DSM 17307 / VKM B-2377 / 273-4).